Reading from the N-terminus, the 77-residue chain is Protein RALF-like 17 (77 aa).

The signal sequence occupies residues 1-29 (MAASREFIICCFLTLLLCNFFMRVESGAA). Cys37 and Cys51 form a disulfide bridge.

The protein belongs to the plant rapid alkalinization factor (RALF) family.

It is found in the secreted. Cell signaling peptide that may regulate plant stress, growth, and development. Mediates a rapid alkalinization of extracellular space by mediating a transient increase in the cytoplasmic Ca(2+) concentration leading to a calcium-dependent signaling events through a cell surface receptor and a concomitant activation of some intracellular mitogen-activated protein kinases. The polypeptide is Protein RALF-like 17 (RALFL17) (Arabidopsis thaliana (Mouse-ear cress)).